A 167-amino-acid polypeptide reads, in one-letter code: Bacterial non-heme ferritin (167 aa).

Residues 1-145 (MLSKEVVKLL…GIVDKIKLIG (145 aa)) form the Ferritin-like diiron domain. Residues Glu-17, Glu-50, His-53, Glu-94, and Gln-127 each contribute to the Fe cation site.

The protein belongs to the ferritin family. Prokaryotic subfamily. As to quaternary structure, homooligomer of 24 subunits that assemble into a spherical protein shell (12 +/- 1 nM diameter) that can sequester at least 2000 iron atoms.

It localises to the cytoplasm. The catalysed reaction is 4 Fe(2+) + O2 + 6 H2O = 4 iron(III) oxide-hydroxide + 12 H(+). Functionally, iron-storage protein. The polypeptide is Bacterial non-heme ferritin (ftn) (Campylobacter jejuni subsp. jejuni serotype O:2 (strain ATCC 700819 / NCTC 11168)).